Consider the following 261-residue polypeptide: Proteasome subunit alpha (261 aa).

The tract at residues 242–261 (NEENKKEEENREETKEKQEE) is disordered.

The protein belongs to the peptidase T1A family. The 20S proteasome core is composed of 14 alpha and 14 beta subunits that assemble into four stacked heptameric rings, resulting in a barrel-shaped structure. The two inner rings, each composed of seven catalytic beta subunits, are sandwiched by two outer rings, each composed of seven alpha subunits. The catalytic chamber with the active sites is on the inside of the barrel. Has a gated structure, the ends of the cylinder being occluded by the N-termini of the alpha-subunits. Is capped at one or both ends by the proteasome regulatory ATPase, PAN.

It localises to the cytoplasm. Its activity is regulated as follows. The formation of the proteasomal ATPase PAN-20S proteasome complex, via the docking of the C-termini of PAN into the intersubunit pockets in the alpha-rings, triggers opening of the gate for substrate entry. Interconversion between the open-gate and close-gate conformations leads to a dynamic regulation of the 20S proteasome proteolysis activity. Component of the proteasome core, a large protease complex with broad specificity involved in protein degradation. The M.jannaschii proteasome is able to cleave oligopeptides after Glu, Asp, Tyr, Phe, Trp, slightly after Arg, but not after Ala. Thus, displays caspase-like and chymotrypsin-like activities and low level of trypsin-like activity. The chain is Proteasome subunit alpha from Methanocaldococcus jannaschii (strain ATCC 43067 / DSM 2661 / JAL-1 / JCM 10045 / NBRC 100440) (Methanococcus jannaschii).